Consider the following 332-residue polypeptide: Ribosomal RNA small subunit methyltransferase C (332 aa).

The protein belongs to the methyltransferase superfamily. RsmC family. Monomer.

The protein resides in the cytoplasm. The catalysed reaction is guanosine(1207) in 16S rRNA + S-adenosyl-L-methionine = N(2)-methylguanosine(1207) in 16S rRNA + S-adenosyl-L-homocysteine + H(+). Its function is as follows. Specifically methylates the guanine in position 1207 of 16S rRNA in the 30S particle. This Pseudomonas aeruginosa (strain LESB58) protein is Ribosomal RNA small subunit methyltransferase C.